We begin with the raw amino-acid sequence, 78 residues long: Putative gastrointestinal growth factor xP1 (78 aa).

The signal sequence occupies residues 1-23; sequence MNYKVFCLVAIALIVGSIGSANG. The P-type domain maps to 30–73; it reads EQCSVERLARVNCGYSGITPQECTKQGCCFDSTIQDAPWCFYPR. Disulfide bonds link C32/C58, C42/C57, and C52/C69.

As to expression, stomach mucosa.

It is found in the secreted. May act as a growth factor. The chain is Putative gastrointestinal growth factor xP1 (p1) from Xenopus laevis (African clawed frog).